Here is a 310-residue protein sequence, read N- to C-terminus: Olfactory receptor 5P53 (310 aa).

The Extracellular portion of the chain corresponds to 1–25; that stretch reads MEAENHTTVAELIILGLTEDPKLCI. N-linked (GlcNAc...) asparagine glycosylation occurs at Asn-5. A helical membrane pass occupies residues 26–46; it reads VFFVIFLGVYIVTLVGNISII. The Cytoplasmic portion of the chain corresponds to 47–54; it reads TLIRISSQ. The helical transmembrane segment at 55-75 threads the bilayer; that stretch reads LHTPMYLFLSHLAFVDILYST. The Extracellular portion of the chain corresponds to 76–99; sequence SVSVIMHMELLGHGLALPVAACAA. Cys-97 and Cys-189 form a disulfide bridge. A helical membrane pass occupies residues 100 to 120; sequence QLCITVSFGSAECFLLAAMAY. The Cytoplasmic portion of the chain corresponds to 121 to 133; the sequence is DRYVAICSPLLYS. A helical membrane pass occupies residues 134–154; it reads TLMSPRVCFLLLGMSYVGGCM. Over 155 to 196 the chain is Extracellular; that stretch reads NGWTFTGCLLSLSFCGPNQIDHFFCDFSPLLKLSCSDVSIIG. The helical transmembrane segment at 197 to 217 threads the bilayer; sequence IIPSISSGSIIVVTVFVIAVS. The Cytoplasmic portion of the chain corresponds to 218–237; it reads YIYILITILNMRSTEGRHKA. Residues 238-258 traverse the membrane as a helical segment; that stretch reads FSTCTSHLTAVTLYYGTITFI. Topologically, residues 259-271 are extracellular; sequence YVMPKSNYSTEQN. The N-linked (GlcNAc...) asparagine glycan is linked to Asn-265. The helical transmembrane segment at 272–292 threads the bilayer; the sequence is KVLSVFYTVVIPMLNPLIYSL. The Cytoplasmic segment spans residues 293 to 310; it reads RNRDVKEALRKATVRVYS.

It belongs to the G-protein coupled receptor 1 family.

It is found in the cell membrane. Its function is as follows. Potential odorant receptor. The polypeptide is Olfactory receptor 5P53 (Mus musculus (Mouse)).